We begin with the raw amino-acid sequence, 397 residues long: Putative odorant receptor 83c (397 aa).

Topologically, residues 1-39 are cytoplasmic; the sequence is MSTSESPSSRFRELSKYINSLTNLLGVDFLSPKLKFNYR. Residues 40 to 60 traverse the membrane as a helical segment; that stretch reads TWTTIFAIANYTGFTVFTILN. Residues 61–70 are Extracellular-facing; it reads NGGDWRVGLK. The chain crosses the membrane as a helical span at residues 71–90; it reads ASLMTGGLFHGLGKFLTCLL. Residues 91 to 136 lie on the Cytoplasmic side of the membrane; that stretch reads KHQDMRRLVLYSQSIYDEYETRGDSYHRTLNSNIDRLLGIMKIIRN. The helical transmembrane segment at 137–157 threads the bilayer; it reads GYVFAFCLMELLPLAMLMYDG. Topologically, residues 158-186 are extracellular; sequence TRVTAMQYLIPGLPLENNYCYVVTYMIQT. The chain crosses the membrane as a helical span at residues 187 to 207; it reads VTMLVQGVGFYSGDLFVFLGL. The Cytoplasmic segment spans residues 208-282; the sequence is TQILTFADML…ALYYELIATQ (75 aa). A helical membrane pass occupies residues 283-299; sequence VLSMALAMMLSFCINLS. Topologically, residues 300-305 are extracellular; the sequence is SFHMPS. The chain crosses the membrane as a helical span at residues 306–326; it reads AIFFVVSAYSMSIYCILGTIL. At 327-365 the chain is on the cytoplasmic side; it reads EFAYDQVYESICNVTWYELSGEQRKLFGFLLRESQYPHN. A helical transmembrane segment spans residues 366-386; the sequence is IQILGVMSLSVRTALQIVKLI. Over 387–397 the chain is Extracellular; sequence YSVSMMMMNRA.

The protein belongs to the insect chemoreceptor superfamily. Heteromeric odorant receptor channel (TC 1.A.69) family. Or67d subfamily. In terms of assembly, interacts with Orco. Complexes exist early in the endomembrane system in olfactory sensory neurons (OSNs), coupling these complexes to the conserved ciliary trafficking pathway. In terms of tissue distribution, expressed in olfactory sensory neurons in the antenna.

It localises to the cell membrane. In terms of biological role, odorant receptor which mediates acceptance or avoidance behavior, depending on its substrates. The odorant receptor repertoire encodes a large collection of odor stimuli that vary widely in identity, intensity, and duration. May form a complex with Orco to form odorant-sensing units, providing sensitive and prolonged odorant signaling and calcium permeability. This chain is Putative odorant receptor 83c (Or83c), found in Drosophila melanogaster (Fruit fly).